The chain runs to 269 residues: UPF0524 protein C3orf70 homolog A (269 aa).

2 disordered regions span residues valine 139 to isoleucine 203 and aspartate 215 to cysteine 249. Residues arginine 141 to threonine 150 show a composition bias toward pro residues. Low complexity predominate over residues histidine 151 to arginine 164. Residues glutamine 179–histidine 191 are compositionally biased toward basic and acidic residues. Over residues aspartate 215 to serine 233 the composition is skewed to acidic residues.

It belongs to the UPF0524 family.

Plays a role in neuronal and neurobehavioral development. Required for normal expression of neuronal markers elavl3 and eno2 and neurobehaviors related to circadian rhythm and changes in light-dark conditions. The polypeptide is UPF0524 protein C3orf70 homolog A (Danio rerio (Zebrafish)).